Here is an 87-residue protein sequence, read N- to C-terminus: Large ribosomal subunit protein bL31B (87 aa).

The protein belongs to the bacterial ribosomal protein bL31 family. Type B subfamily. As to quaternary structure, part of the 50S ribosomal subunit.

The polypeptide is Large ribosomal subunit protein bL31B (Ralstonia nicotianae (strain ATCC BAA-1114 / GMI1000) (Ralstonia solanacearum)).